A 426-amino-acid polypeptide reads, in one-letter code: 3-phosphoshikimate 1-carboxyvinyltransferase (426 aa).

3-phosphoshikimate contacts are provided by Lys-22, Ser-23, and Arg-27. Lys-22 lines the phosphoenolpyruvate pocket. The phosphoenolpyruvate site is built by Gly-96 and Arg-124. Ser-170, Ser-171, Gln-172, Ser-198, Asp-314, Asn-337, and Lys-341 together coordinate 3-phosphoshikimate. Residue Gln-172 coordinates phosphoenolpyruvate. The Proton acceptor role is filled by Asp-314. 3 residues coordinate phosphoenolpyruvate: Arg-345, Arg-387, and Lys-412.

Belongs to the EPSP synthase family. As to quaternary structure, monomer.

Its subcellular location is the cytoplasm. The enzyme catalyses 3-phosphoshikimate + phosphoenolpyruvate = 5-O-(1-carboxyvinyl)-3-phosphoshikimate + phosphate. It participates in metabolic intermediate biosynthesis; chorismate biosynthesis; chorismate from D-erythrose 4-phosphate and phosphoenolpyruvate: step 6/7. In terms of biological role, catalyzes the transfer of the enolpyruvyl moiety of phosphoenolpyruvate (PEP) to the 5-hydroxyl of shikimate-3-phosphate (S3P) to produce enolpyruvyl shikimate-3-phosphate and inorganic phosphate. The sequence is that of 3-phosphoshikimate 1-carboxyvinyltransferase from Shewanella oneidensis (strain ATCC 700550 / JCM 31522 / CIP 106686 / LMG 19005 / NCIMB 14063 / MR-1).